Reading from the N-terminus, the 516-residue chain is Flavin-dependent halogenase armH2 (516 aa).

FAD contacts are provided by glycine 16, alanine 19, and glutamate 49. The chloride site is built by serine 328 and glycine 329. Position 330 (isoleucine 330) interacts with FAD. The segment at 440–475 (PQANGNGAAKQDAVPAPIPVALSSGAGPEKDAKRRE) is disordered.

The protein belongs to the flavin-dependent halogenase family.

It carries out the reaction melleolide F + FADH2 + chloride + O2 = 6'-chloromelleolide F + FAD + 2 H2O + H(+). Flavin-dependent halogenase involved in the biosynthesis of melleolides, a range of antifungal and phytotoxic polyketide derivatives composed of an orsellinic acid (OA) moiety esterified to various sesquiterpene alcohols. The halogenase catalyzes the transfer of a single chlorine atom to the melleolide backbone, resulting in a 6'-chloromelleolide product. The enzyme acts on free substrate and does not depend on carrier-protein-dependent acceptor molecules. The protein is Flavin-dependent halogenase armH2 of Armillaria mellea (Honey mushroom).